The primary structure comprises 214 residues: Probable DNA (cytosine-5)-methyltransferase (214 aa).

Residue C62 is part of the active site.

The protein belongs to the class I-like SAM-binding methyltransferase superfamily. C5-methyltransferase family. In terms of assembly, probably requires another subunit for function.

It carries out the reaction a 2'-deoxycytidine in DNA + S-adenosyl-L-methionine = a 5-methyl-2'-deoxycytidine in DNA + S-adenosyl-L-homocysteine + H(+). This is probably the methylase that recognizes and modifies 5'-CpG-3'. In Dryophytes versicolor (chameleon treefrog), this protein is Probable DNA (cytosine-5)-methyltransferase.